Here is a 129-residue protein sequence, read N- to C-terminus: Follitropin subunit beta (129 aa).

A signal peptide spans 1–18 (MKTLQFFFLFCCWKAICC). Intrachain disulfides connect Cys21/Cys69, Cys35/Cys84, Cys38/Cys122, Cys46/Cys100, Cys50/Cys102, and Cys105/Cys112. Asn25 and Asn42 each carry an N-linked (GlcNAc...) asparagine glycan.

It belongs to the glycoprotein hormones subunit beta family. In terms of assembly, heterodimer. The active follitropin is a heterodimer composed of an alpha chain/CGA shared with other hormones and a unique beta chain/FSHB shown here.

It is found in the secreted. Its function is as follows. Together with the alpha chain CGA constitutes follitropin, the follicle-stimulating hormone, and provides its biological specificity to the hormone heterodimer. Binds FSHR, a G protein-coupled receptor, on target cells to activate downstream signaling pathways. Follitropin is involved in follicle development and spermatogenesis in reproductive organs. The sequence is that of Follitropin subunit beta (FSHB) from Homo sapiens (Human).